The chain runs to 343 residues: Nuclear hormone receptor family member nhr-167 (343 aa).

The nuclear receptor DNA-binding region spans 5 to 81 (HQKCAVCGRF…VGMTLPSYLL (77 aa)). 2 consecutive NR C4-type zinc fingers follow at residues 8–28 (CAVC…CNSC) and 45–64 (CFRG…CTSC). One can recognise an NR LBD domain in the interval 101–339 (THNKRMDSLF…KKLVKDGIEA (239 aa)).

This sequence belongs to the nuclear hormone receptor family.

The protein localises to the nucleus. In terms of biological role, orphan nuclear receptor. The sequence is that of Nuclear hormone receptor family member nhr-167 (nhr-167) from Caenorhabditis elegans.